The following is a 1157-amino-acid chain: MKAGHLLWALLLMHSLWSIPTDGAIRNYYLGIQDMQWNYAPKGRNVITNQTLNNDTVASSFLKSGKNRIGSSYKKTVYKEYSDGTYTEEIAKPAWLGFLGPLLQAEVGDVILIHLKNFASRPYTIHPHGVFYEKDSEGSLYPDGSSGYLKADDSVPPGGSHVYNWSIPESHAPTEADPACLTWIYHSHVDAPRDIATGLIGPLITCKRGTLDGNSPPQRKDVDHNFFLLFSVIDENLSWHLDDNIATYCSDPASVDKEDGAFQDSNRMHAINGFVFGNLPELSMCAQKHVAWHLFGMGNEIDVHTAFFHGQMLSIRGHHTDVANIFPATFVTAEMVPQKSGTWLISCEVNSHLRSGMQAFYKVDSCSMDPPVDQLTGKVRQYFIQAHEIQWDYGPIGYDGRTGKSLREPGSGPDKYFQKSSSRIGGTYWKVRYEAFQDETFQERVHQEEETHLGILGPVIRAEVGDTIQVVFYNRASQPFSIQPHGVFYEKNSEGTVYNDGTSHPKVAKSFEKVTYYWTVPPHAGPTAQDPACLTWMYFSAADPTRDTNSGLVGPLLVCKAGALGADGKQKGVDKEFFLLFTVFDENESWYNNANQAAGMLDSRLLSEDVEGFQDSNRMHAINGFLFSNLPRLDMCKGDTVAWHLLGLGTETDVHGVMFEGNTVQLQGMRKGAVMLFPHTFVTAIMQPDNPGIFEIYCQAGSHREEGMQAIYNVSQCSSHQDSPRQHYQASRVYYIMAEEIEWDYCPDRSWELEWHNTSEKDSYGHVFLSNKDGLLGSKYKKAVFREYTDGTFRIPRPRSGPEEHLGILGPLIRGEVGDILTVVFKNKASRPYSIHAHGVLESNTGGPQAAEPGEVLTYQWNIPERSGPGPSDSACVSWIYYSAVDPIKDMYSGLVGPLVICRNGILEPNGGRNDMDREFALLFLIFDENQSWYLKENIATYGPQESSHVNLKDATFLESNKMHAINGKLYANLRGLTVYQGERVAWYMLAMGQDTDIHTVHFHAESFLYQNGQSYRADVVDLFPGTFEVVEMVASNPGTWLMHCHVTDHVHAGMETIFTVLSHEEHFSTMTTITKEIGKAVILRDIGGDNVKMLGMNIPIKDVEILSSALIAICVLLLLIALALGGVVWYQHRQRKLRRNRRSILDDSFKLLSLKQ.

The first 18 residues, 1 to 18 (MKAGHLLWALLLMHSLWS), serve as a signal peptide directing secretion. Topologically, residues 19–1109 (IPTDGAIRNY…PIKDVEILSS (1091 aa)) are extracellular. 6 Plastocyanin-like domains span residues 24-206 (AIRN…LITC), 218-366 (QRKD…VDSC), 370-559 (PPVD…LLVC), 569-717 (KQKG…VSQC), 730-902 (ASRV…LVIC), and 910-1066 (NGGR…SHEE). N-linked (GlcNAc...) asparagine glycans are attached at residues N49 and N54. Na(+) contacts are provided by G70 and Y73. Cu(2+)-binding residues include H126 and H128. O2 is bound at residue H126. Ca(2+)-binding residues include K134, D152, and D153. A glycan (N-linked (GlcNAc...) asparagine) is linked at N164. C180 and C206 are disulfide-bonded. Residues H186 and H188 each coordinate Cu(2+). H186 contributes to the O2 binding site. N236 carries an N-linked (GlcNAc...) asparagine glycan. S265 provides a ligand contact to Na(+). Cysteines 285 and 366 form a disulfide. H304, C347, and H352 together coordinate Cu(2+). Residues Y416, G425, and Y428 each contribute to the Na(+) site. A disulfide bridge connects residues C533 and C559. N-linked (GlcNAc...) asparagine glycosylation is present at N587. A Na(+)-binding site is contributed by S616. Cysteines 636 and 717 form a disulfide. Cu(2+) is bound by residues H655, C698, H703, and M708. N-linked (GlcNAc...) asparagine glycans are attached at residues N713 and N757. F768 and G777 together coordinate Na(+). C876 and C902 are oxidised to a cystine. The N-linked (GlcNAc...) asparagine glycan is linked to N930. Residues H999, H1002, H1004, H1044, C1045, H1046, H1050, and M1055 each contribute to the Cu(2+) site. Residues H1002 and H1004 each contribute to the O2 site. O2 is bound at residue H1046. A helical membrane pass occupies residues 1110–1130 (ALIAICVLLLLIALALGGVVW). The Cytoplasmic portion of the chain corresponds to 1131–1157 (YQHRQRKLRRNRRSILDDSFKLLSLKQ). Phosphoserine is present on residues S1144, S1149, and S1154.

Belongs to the multicopper oxidase family. Part of a complex composed of SLC40A1/ferroportin, TF/transferrin and HEPH/hephaestin that transfers iron from cells to transferrin. Requires Cu cation as cofactor.

The protein resides in the basolateral cell membrane. The enzyme catalyses 4 Fe(2+) + O2 + 4 H(+) = 4 Fe(3+) + 2 H2O. Plasma membrane ferroxidase that mediates the extracellular conversion of ferrous/Fe(2+) iron into its ferric/Fe(3+) form. Couples ferroportin which specifically exports ferrous/Fe(2+) iron from cells to transferrin that only binds and shuttles extracellular ferric/Fe(3+) iron throughout the body. By helping iron transfer from cells to blood mainly contributes to dietary iron absorption by the intestinal epithelium and more generally regulates iron levels in the body. This Mus musculus (Mouse) protein is Hephaestin.